Consider the following 121-residue polypeptide: Small ribosomal subunit protein uS13 (121 aa).

The tract at residues 94-121 is disordered; the sequence is GLPVRGQNTKNNSRTRKGPRRTVANKKK. The segment covering 106 to 121 has biased composition (basic residues); that stretch reads SRTRKGPRRTVANKKK.

It belongs to the universal ribosomal protein uS13 family. Part of the 30S ribosomal subunit. Forms a loose heterodimer with protein S19. Forms two bridges to the 50S subunit in the 70S ribosome.

Its function is as follows. Located at the top of the head of the 30S subunit, it contacts several helices of the 16S rRNA. In the 70S ribosome it contacts the 23S rRNA (bridge B1a) and protein L5 of the 50S subunit (bridge B1b), connecting the 2 subunits; these bridges are implicated in subunit movement. Contacts the tRNAs in the A and P-sites. The polypeptide is Small ribosomal subunit protein uS13 (Halalkalibacterium halodurans (strain ATCC BAA-125 / DSM 18197 / FERM 7344 / JCM 9153 / C-125) (Bacillus halodurans)).